Consider the following 690-residue polypeptide: MEGFNPADIEHASPINSSDSHSSSFVYALPKSASEYVVNHNEGRASASGNPAAVPSPIMTLNLKSTHSLNIDQHVHTSTSPTETIGHIHHVEKLNQNNLIHLDPVPNFEDKSDIKPWLQKIFYPQGIELVIERSDAFKVVFKCKAAKRGRNARRKRKDKPKGQDHEDEKSKINDDELEYASPSNATVTNGPQTSPDQTSSIKPKKKRCVSRFNNCPFRVRATYSLKRKRWSIVVMDNNHSHQLKFNPDSEEYKKFKEKLRKDNDVDAIKKFDELEYRTLANLPIPTATIPCDCGLTNEIQSFNVVLPTNSNVTSSASSSTVSSISLDSSNASKRPCLPSVNNTGSINTNNVRKPKSQCKNKDTLLKRTTMQNFLTTKSRLRKTGTPTSSQHSSTAFSGYIDDPFNLNEILPLPASDFKLNTVTNLNEIDFTNIFTKSPHPHSGSTHPRQVFDQLDDCSSILFSPLTTNTNNEFEGESDDFVHSPYLNSEADFSQILSSAPPVHHDPNETHQENQDIIDRFANSSQEHNEYILQYLTHSDAANHNNIGVPNNNSHSLNTQHNVSDLGNSLLRQEALVGSSSTKIFDELKFVQNGPHGSQHPIDFQHVDHRHLSSNEPQVRSHQYGPQQQPPQQLQYHQNQPHDGHNHEQHQTVQKDMQTHESLEIMGNTLLEEFKDIKMVNGELKYVKPED.

The disordered stretch occupies residues 1–21; sequence MEGFNPADIEHASPINSSDSH. Zn(2+) is bound at residue Asp-110. Lys-111, Lys-115, Ile-131, Glu-132, Arg-133, Ser-134, Asp-135, and Lys-138 together coordinate DNA. Cys-143 contacts Zn(2+). The span at 148-159 shows a compositional bias: basic residues; it reads RGRNARRKRKDK. Positions 148-205 are disordered; sequence RGRNARRKRKDKPKGQDHEDEKSKINDDELEYASPSNATVTNGPQTSPDQTSSIKPKK. Residues 160 to 174 show a composition bias toward basic and acidic residues; sequence PKGQDHEDEKSKIND. The span at 181–201 shows a compositional bias: polar residues; sequence SPSNATVTNGPQTSPDQTSSI. Cys-215 contributes to the Zn(2+) binding site. Residue Lys-226 participates in DNA binding. 2 residues coordinate Zn(2+): His-239 and His-241. Asn-263 lines the DNA pocket. A CDC [2Fe-2S] cluster binding motif motif is present at residues 291-293; that stretch reads CDC. Disordered stretches follow at residues 335–357 and 612–655; these read PCLPSVNNTGSINTNNVRKPKSQ and SSNE…VQKD. A compositionally biased stretch (polar residues) spans 339 to 351; sequence SVNNTGSINTNNV. The segment covering 621–638 has biased composition (low complexity); the sequence is HQYGPQQQPPQQLQYHQN. The segment covering 639 to 649 has biased composition (basic and acidic residues); sequence QPHDGHNHEQH.

As to quaternary structure, homodimer. Dimerization decreases the DNA-binding activity.

The protein resides in the nucleus. Dimerization via the binding of Fe(2+) or a [2Fe-2S] cluster decreases the DNA-binding activity. In terms of biological role, transcription factor that activates the genes for FRE1, FRE2 and FET3 in response to iron deprivationand thereby plays a central role in iron homeostasis. Also required for the expression of LSO1. Recognizes the consensus iron-responsive element (Fe-RE) sequence 5'-CACCC-3' in the promoters of target genes. Iron could interact directly with AFT1 and inhibits its activity. In high iron condition, the presence of Fe(2+) or [2Fe-2S] cluster leads to dimerization, which in turn leads to a decrease in DNA affinity. In Saccharomyces cerevisiae (strain ATCC 204508 / S288c) (Baker's yeast), this protein is Iron-regulated transcriptional activator AFT1.